The primary structure comprises 445 residues: Plasmid recombination enzyme (445 aa).

Residues Tyr45 and Tyr113 each coordinate DNA.

Belongs to the plasmid mobilization pre family.

In Bacillus thuringiensis, this protein is Plasmid recombination enzyme.